The following is a 717-amino-acid chain: Ribosomal RNA large subunit methyltransferase K/L (717 aa).

The region spanning 44–155 (DAYKVCIYSY…KQFVNVFLCL (112 aa)) is the THUMP domain.

It belongs to the methyltransferase superfamily. RlmKL family.

Its subcellular location is the cytoplasm. It carries out the reaction guanosine(2445) in 23S rRNA + S-adenosyl-L-methionine = N(2)-methylguanosine(2445) in 23S rRNA + S-adenosyl-L-homocysteine + H(+). The catalysed reaction is guanosine(2069) in 23S rRNA + S-adenosyl-L-methionine = N(2)-methylguanosine(2069) in 23S rRNA + S-adenosyl-L-homocysteine + H(+). Its function is as follows. Specifically methylates the guanine in position 2445 (m2G2445) and the guanine in position 2069 (m7G2069) of 23S rRNA. This Francisella tularensis subsp. tularensis (strain WY96-3418) protein is Ribosomal RNA large subunit methyltransferase K/L.